We begin with the raw amino-acid sequence, 59 residues long: UPF0434 protein Shew_1640 (59 aa).

This sequence belongs to the UPF0434 family.

This is UPF0434 protein Shew_1640 from Shewanella loihica (strain ATCC BAA-1088 / PV-4).